Consider the following 335-residue polypeptide: N-acetyl-gamma-glutamyl-phosphate reductase (335 aa).

Cys156 is a catalytic residue.

The protein belongs to the NAGSA dehydrogenase family. Type 1 subfamily.

It is found in the cytoplasm. The enzyme catalyses N-acetyl-L-glutamate 5-semialdehyde + phosphate + NADP(+) = N-acetyl-L-glutamyl 5-phosphate + NADPH + H(+). The protein operates within amino-acid biosynthesis; L-arginine biosynthesis; N(2)-acetyl-L-ornithine from L-glutamate: step 3/4. Catalyzes the NADPH-dependent reduction of N-acetyl-5-glutamyl phosphate to yield N-acetyl-L-glutamate 5-semialdehyde. This is N-acetyl-gamma-glutamyl-phosphate reductase from Aeromonas hydrophila subsp. hydrophila (strain ATCC 7966 / DSM 30187 / BCRC 13018 / CCUG 14551 / JCM 1027 / KCTC 2358 / NCIMB 9240 / NCTC 8049).